Here is a 137-residue protein sequence, read N- to C-terminus: Glutamate mutase sigma subunit (137 aa).

The B12-binding domain occupies K3–E137. Adenosylcob(III)alamin-binding positions include S13 to A17, H16, S61 to L63, and N93 to G97.

The protein belongs to the methylaspartate mutase GlmS subunit family. In terms of assembly, heterotetramer composed of 2 epsilon subunits (GlmE) and 2 sigma subunits (GlmS). GlmE exists as a homodimer and GlmS as a monomer. The cofactor is adenosylcob(III)alamin.

The enzyme catalyses (2S,3S)-3-methyl-L-aspartate = L-glutamate. It participates in amino-acid degradation; L-glutamate degradation via mesaconate pathway; acetate and pyruvate from L-glutamate: step 1/4. Catalyzes the carbon skeleton rearrangement of L-glutamate to L-threo-3-methylaspartate ((2S,3S)-3-methylaspartate). The sequence is that of Glutamate mutase sigma subunit from Clostridium tetanomorphum.